Consider the following 129-residue polypeptide: Lysozyme C (129 aa).

In terms of domain architecture, C-type lysozyme spans lysine 1–leucine 129. 4 disulfides stabilise this stretch: cysteine 6–cysteine 127, cysteine 30–cysteine 115, cysteine 64–cysteine 80, and cysteine 76–cysteine 94. Active-site residues include glutamate 35 and aspartate 52.

It belongs to the glycosyl hydrolase 22 family. As to quaternary structure, monomer.

It localises to the secreted. The catalysed reaction is Hydrolysis of (1-&gt;4)-beta-linkages between N-acetylmuramic acid and N-acetyl-D-glucosamine residues in a peptidoglycan and between N-acetyl-D-glucosamine residues in chitodextrins.. Its function is as follows. Lysozymes have primarily a bacteriolytic function; those in tissues and body fluids are associated with the monocyte-macrophage system and enhance the activity of immunoagents. The chain is Lysozyme C (LYZ) from Numida meleagris (Helmeted guineafowl).